The primary structure comprises 485 residues: Glutamyl-tRNA(Gln) amidotransferase subunit A (485 aa).

Active-site charge relay system residues include lysine 78 and serine 153. The active-site Acyl-ester intermediate is the serine 177.

Belongs to the amidase family. GatA subfamily. As to quaternary structure, heterotrimer of A, B and C subunits.

The enzyme catalyses L-glutamyl-tRNA(Gln) + L-glutamine + ATP + H2O = L-glutaminyl-tRNA(Gln) + L-glutamate + ADP + phosphate + H(+). In terms of biological role, allows the formation of correctly charged Gln-tRNA(Gln) through the transamidation of misacylated Glu-tRNA(Gln) in organisms which lack glutaminyl-tRNA synthetase. The reaction takes place in the presence of glutamine and ATP through an activated gamma-phospho-Glu-tRNA(Gln). The polypeptide is Glutamyl-tRNA(Gln) amidotransferase subunit A (Geobacter sulfurreducens (strain ATCC 51573 / DSM 12127 / PCA)).